Here is a 430-residue protein sequence, read N- to C-terminus: Gamma-glutamyl phosphate reductase (430 aa).

This sequence belongs to the gamma-glutamyl phosphate reductase family.

It is found in the cytoplasm. It carries out the reaction L-glutamate 5-semialdehyde + phosphate + NADP(+) = L-glutamyl 5-phosphate + NADPH + H(+). It participates in amino-acid biosynthesis; L-proline biosynthesis; L-glutamate 5-semialdehyde from L-glutamate: step 2/2. Catalyzes the NADPH-dependent reduction of L-glutamate 5-phosphate into L-glutamate 5-semialdehyde and phosphate. The product spontaneously undergoes cyclization to form 1-pyrroline-5-carboxylate. The polypeptide is Gamma-glutamyl phosphate reductase (Rhodopseudomonas palustris (strain BisA53)).